The chain runs to 483 residues: Sphingomyelin phosphodiesterase 5 (483 aa).

The segment at 1-20 (MSLPDISRRRSPVPQEDWPL) is disordered. Residues 80-100 (VLLPLVVVGLPLALVGLALWL) traverse the membrane as a helical segment. Position 209 (Glu209) interacts with Mg(2+). His471 serves as the catalytic Proton acceptor.

This sequence belongs to the neutral sphingomyelinase family. It depends on Mg(2+) as a cofactor. Mn(2+) is required as a cofactor. As to expression, highly expressed in testis, pancreas, epididymis, and brain.

It localises to the mitochondrion inner membrane. It is found in the endoplasmic reticulum membrane. It carries out the reaction a sphingomyelin + H2O = phosphocholine + an N-acylsphing-4-enine + H(+). The catalysed reaction is N-(hexadecanoyl)-sphing-4-enine-1-phosphocholine + H2O = N-hexadecanoylsphing-4-enine + phosphocholine + H(+). The protein operates within lipid metabolism; sphingolipid metabolism. Its activity is regulated as follows. Activated by anionic phospholipids, specially cardiolipin and phosphatidylserine. Catalyzes the hydrolysis of membrane sphingomyelin to form phosphorylcholine and ceramide. This Mus musculus (Mouse) protein is Sphingomyelin phosphodiesterase 5.